The following is a 446-amino-acid chain: MVLNSSDLGPSRCDIRDLPAPSSTNDQGKTELARKKKVKRSNTEIEADASSSDNSCFVALVTASNLRKDALYLPQDLTSSVGLERKYREIVVTDERERRSWALDLRFNKSSDTFYISRGWRSFCDENGKKPGGVFVFKLVGNRETPVLSFCSTESINDGTQGHKNNKYNCMELKSKKKRMRCRDSTSPSQNRFMTLTLTHDNLIKSRRYLPLSFTRDNGLDKPGMIFLLGKTGRKWEANLLREASGRIVLTGKGWKEFAMANGLKSGELFTLEAILEKGTPMLSLVNTQSTNYRSQQGECSRDSEKESSICAEPSRGNKKWKATNNRKERRDSSSAIQNRYVTLTLTPEDVRACTLILPSQFMKANGINKLGKKTLLGQNRKKWFAYLLSKSGFVALGSGWKGFCEANGVKTGESFNLEYIDEQDTTPVFKFCSNSVEYVKFTSLP.

The interval 1-46 (MVLNSSDLGPSRCDIRDLPAPSSTNDQGKTELARKKKVKRSNTEIE) is disordered. 2 consecutive DNA-binding regions (TF-B3) follow at residues 56–153 (CFVA…FCST) and 193–289 (FMTL…VNTQ). A disordered region spans residues 295–334 (SQQGECSRDSEKESSICAEPSRGNKKWKATNNRKERRDSS). Residues 341 to 435 (YVTLTLTPED…TTPVFKFCSN (95 aa)) constitute a DNA-binding region (TF-B3 3).

The protein localises to the nucleus. The sequence is that of B3 domain-containing protein REM12 (REM12) from Arabidopsis thaliana (Mouse-ear cress).